We begin with the raw amino-acid sequence, 138 residues long: Mini-ribonuclease 3 (138 aa).

D33 is an active-site residue.

The protein belongs to the MrnC RNase family. In terms of assembly, homodimer. Requires Mg(2+) as cofactor.

The protein localises to the cytoplasm. In terms of biological role, involved in correct processing of both the 5' and 3' ends of 23S rRNA precursor. Processes 30S rRNA precursor transcript even in absence of ribonuclease 3 (Rnc); Rnc processes 30S rRNA into smaller rRNA precursors. This is Mini-ribonuclease 3 from Synechococcus sp. (strain ATCC 27144 / PCC 6301 / SAUG 1402/1) (Anacystis nidulans).